Reading from the N-terminus, the 156-residue chain is Small ribosomal subunit protein uS7 (156 aa).

The protein belongs to the universal ribosomal protein uS7 family. Part of the 30S ribosomal subunit. Contacts proteins S9 and S11.

One of the primary rRNA binding proteins, it binds directly to 16S rRNA where it nucleates assembly of the head domain of the 30S subunit. Is located at the subunit interface close to the decoding center, probably blocks exit of the E-site tRNA. This Chromohalobacter salexigens (strain ATCC BAA-138 / DSM 3043 / CIP 106854 / NCIMB 13768 / 1H11) protein is Small ribosomal subunit protein uS7.